A 305-amino-acid polypeptide reads, in one-letter code: Homoserine O-acetyltransferase (305 aa).

Catalysis depends on cysteine 142, which acts as the Acyl-thioester intermediate. Residues lysine 163 and serine 192 each coordinate substrate. Histidine 235 functions as the Proton acceptor in the catalytic mechanism. Glutamate 237 is an active-site residue. Position 249 (arginine 249) interacts with substrate.

It belongs to the MetA family.

Its subcellular location is the cytoplasm. The catalysed reaction is L-homoserine + acetyl-CoA = O-acetyl-L-homoserine + CoA. Its pathway is amino-acid biosynthesis; L-methionine biosynthesis via de novo pathway; O-acetyl-L-homoserine from L-homoserine: step 1/1. In terms of biological role, transfers an acetyl group from acetyl-CoA to L-homoserine, forming acetyl-L-homoserine. In Acetivibrio thermocellus (strain ATCC 27405 / DSM 1237 / JCM 9322 / NBRC 103400 / NCIMB 10682 / NRRL B-4536 / VPI 7372) (Clostridium thermocellum), this protein is Homoserine O-acetyltransferase.